Reading from the N-terminus, the 446-residue chain is Histidine--tRNA ligase (446 aa).

The interval 403 to 422 (TASVKPLRGTGDDGEKSVQQ) is disordered.

Belongs to the class-II aminoacyl-tRNA synthetase family. As to quaternary structure, homodimer.

It localises to the cytoplasm. The enzyme catalyses tRNA(His) + L-histidine + ATP = L-histidyl-tRNA(His) + AMP + diphosphate + H(+). The chain is Histidine--tRNA ligase from Burkholderia thailandensis (strain ATCC 700388 / DSM 13276 / CCUG 48851 / CIP 106301 / E264).